A 92-amino-acid polypeptide reads, in one-letter code: DNA-directed RNA polymerase subunit Rpo5 (92 aa).

The protein belongs to the archaeal Rpo5/eukaryotic RPB5 RNA polymerase subunit family. Part of the RNA polymerase complex.

The protein localises to the cytoplasm. It carries out the reaction RNA(n) + a ribonucleoside 5'-triphosphate = RNA(n+1) + diphosphate. Its function is as follows. DNA-dependent RNA polymerase (RNAP) catalyzes the transcription of DNA into RNA using the four ribonucleoside triphosphates as substrates. In Methanopyrus kandleri (strain AV19 / DSM 6324 / JCM 9639 / NBRC 100938), this protein is DNA-directed RNA polymerase subunit Rpo5.